The primary structure comprises 235 residues: Carboxy-S-adenosyl-L-methionine synthase (235 aa).

S-adenosyl-L-methionine-binding positions include tyrosine 35, 60-62, 83-84, asparagine 124, and arginine 191; these read GCS and DN.

It belongs to the class I-like SAM-binding methyltransferase superfamily. Cx-SAM synthase family. As to quaternary structure, homodimer.

The enzyme catalyses prephenate + S-adenosyl-L-methionine = carboxy-S-adenosyl-L-methionine + 3-phenylpyruvate + H2O. Its function is as follows. Catalyzes the conversion of S-adenosyl-L-methionine (SAM) to carboxy-S-adenosyl-L-methionine (Cx-SAM). The sequence is that of Carboxy-S-adenosyl-L-methionine synthase from Campylobacter jejuni subsp. jejuni serotype O:23/36 (strain 81-176).